The sequence spans 117 residues: G antigen 6 (117 aa).

The disordered stretch occupies residues 1–117; that stretch reads MSWRGRSTYY…PEEGEKQSQC (117 aa). 2 stretches are compositionally biased toward acidic residues: residues 32-45 and 87-96; these read FSDEVEPATPEEGE and ECEDGPDGQE. Residues 103–117 show a composition bias toward basic and acidic residues; the sequence is EEVKTPEEGEKQSQC.

Belongs to the GAGE family. As to expression, expressed in a variety of tumor tissues but not in normal tissues, except testis.

This chain is G antigen 6 (GAGE6), found in Homo sapiens (Human).